We begin with the raw amino-acid sequence, 478 residues long: NAD(+) hydrolase ThsA (478 aa).

One can recognise a Deacetylase sirtuin-type domain in the interval methionine 1–threonine 287. The NAD(+) site is built by alanine 19, aspartate 110, and histidine 148. Histidine 148 (proton acceptor) is an active-site residue. The segment at isoleucine 288–aspartate 478 is SLOG (STALD) domain. Residues glycine 292, serine 293, leucine 330, arginine 373, lysine 390, glycine 401, and glutamate 405 each coordinate 3'cADPR.

This sequence belongs to the soluble Thoeris ThsA family. As to quaternary structure, homotetramer in solution.

It carries out the reaction NAD(+) + H2O = ADP-D-ribose + nicotinamide + H(+). Its activity is regulated as follows. Activated by 3'cADPR. Functionally, NAD(+) hydrolyzing component (NADase) of the Thoeris antiviral defense system, composed of ThsA and ThsB (maybe AS248_15445). Activated by 3' cyclic ADP-D-ribose (3'cADPR) but not its isomers 2'cADPR, cADPR and very weakly by ADPR; binds 3'cADPR better than 2'cADPR. Upon activation binds and hydrolyzes NAD(+), leading to cell death and inhibition of phage replication. The polypeptide is NAD(+) hydrolase ThsA (Enterococcus faecium (Streptococcus faecium)).